The sequence spans 161 residues: Endoribonuclease YbeY (161 aa).

Zn(2+) contacts are provided by His127, His131, and His137.

Belongs to the endoribonuclease YbeY family. It depends on Zn(2+) as a cofactor.

It is found in the cytoplasm. Single strand-specific metallo-endoribonuclease involved in late-stage 70S ribosome quality control and in maturation of the 3' terminus of the 16S rRNA. The chain is Endoribonuclease YbeY from Listeria welshimeri serovar 6b (strain ATCC 35897 / DSM 20650 / CCUG 15529 / CIP 8149 / NCTC 11857 / SLCC 5334 / V8).